We begin with the raw amino-acid sequence, 266 residues long: Undecaprenyl-diphosphatase (266 aa).

8 consecutive transmembrane segments (helical) span residues 1–21 (MTLLQAIILGIVQGLTEFLPV), 40–60 (LPLYVDIATNTGTFFAVLVVL), 90–110 (LLVVLGSIPTAMIGLGLKPIF), 113–133 (LNQPLYVSFALIVTGLVLWFT), 145–165 (LSWLDATIGGIAQGCAVIPGI), 188–208 (FSFLMYLVVSFGVAILGIDEV), 217–237 (PLLGMIIASFVTGYIALLWLF), and 245–265 (FKWFAPYLWVVAAITLIKVAM).

It belongs to the UppP family.

The protein resides in the cell inner membrane. The enzyme catalyses di-trans,octa-cis-undecaprenyl diphosphate + H2O = di-trans,octa-cis-undecaprenyl phosphate + phosphate + H(+). Its function is as follows. Catalyzes the dephosphorylation of undecaprenyl diphosphate (UPP). Confers resistance to bacitracin. The sequence is that of Undecaprenyl-diphosphatase from Acaryochloris marina (strain MBIC 11017).